The primary structure comprises 166 residues: Regulatory protein RecX (166 aa).

It belongs to the RecX family.

The protein localises to the cytoplasm. Its function is as follows. Modulates RecA activity. The protein is Regulatory protein RecX of Escherichia coli (strain SE11).